Consider the following 296-residue polypeptide: AUGMIN subunit 2 (296 aa).

Coiled coils occupy residues 56–83 (DDLI…QGRK) and 253–285 (AVHK…NRRL). The disordered stretch occupies residues 218–296 (AVSLPTTPGG…WPPSVKKSSV (79 aa)). The segment covering 264–277 (QNEEEEEEEEEEDG) has biased composition (acidic residues).

This sequence belongs to the HAUS2 family. Part of the augmin complex composed of 8 subunits. The complex acts on microtubules and interacts with gamma-tubulin in spindles and the phragmoplast.

Contributes to the assembly of the acentrosomal spindle and phragmoplast microtubule arrays as part of the augmin complex. This chain is AUGMIN subunit 2, found in Arabidopsis thaliana (Mouse-ear cress).